The following is a 335-amino-acid chain: Large ribosomal subunit protein uL10 (335 aa).

The interval 304–335 (GAAAPVEEAPVEEKKEEKKEEAAPAAGLGMLF) is disordered. Residues 314-325 (VEEKKEEKKEEA) show a composition bias toward basic and acidic residues.

This sequence belongs to the universal ribosomal protein uL10 family. In terms of assembly, part of the 50S ribosomal subunit. Forms part of the ribosomal stalk which helps the ribosome interact with GTP-bound translation factors. Forms a heptameric L10(L12)2(L12)2(L12)2 complex, where L10 forms an elongated spine to which the L12 dimers bind in a sequential fashion.

Its function is as follows. Forms part of the ribosomal stalk, playing a central role in the interaction of the ribosome with GTP-bound translation factors. This chain is Large ribosomal subunit protein uL10, found in Methanococcus maripaludis (strain C6 / ATCC BAA-1332).